Consider the following 1125-residue polypeptide: Transient receptor potential cation channel subfamily A member 1 (1125 aa).

At 1–721 the chain is on the cytoplasmic side; that stretch reads MKRGLRRILL…KWCAYGFRAH (721 aa). ANK repeat units follow at residues 63–94, 98–127, 131–161, 165–194, 198–227, 239–268, 272–301, 309–338, and 342–371; these read ENLCPLHHAAAEGQVELMELIINGSSCEVLNI, YGNTPLHCAAEKNQVESVKFLLSQGANPNL, NMMSPLHIAVHGMYNEVIKVLTEHKATNINL, NGNTALMSTCAKDNSEALQILLEKGAKLCK, WGDYPVHQAAFSGAKKCMELILAYGEKNGY, KKASPLHLAVQSGDLDMIKMCLDNGAHIDM, AKCMALHFAATQGATDIVKLMISSYTGSSD, NQETLLHRASLFDHHDLAEYLISVGADINS, and EGRSPLILATASASWNIVNLLLCKGAKVDI. Intrachain disulfides connect Cys193/Cys666, Cys463/Cys666, Cys609/Cys622, Cys622/Cys666, and Cys634/Cys859. Pro395 carries the 4-hydroxyproline; transient modification. ANK repeat units lie at residues 413-442, 446-475, 482-511, 514-543, and 548-577; these read DGCTPLHYACRQGVPVSVNNLLGFNVSIHS, DKKSPLHFAASYGRINTCQRLLQDISDTRL, HGMTPLHLAAKNGHDKVVQLLLKKGALFLS, NGWTALHHASMGGYTQTMKVILDTNLKCTD, and EGNTALHFAAREGHAKAVAMLLSYNADILL. Positions 415 and 422 each coordinate (E)-cinnamaldehyde. Cys622 is a (E)-cinnamaldehyde binding site. Cys634 is modified (cysteine sulfenic acid (-SOH); transient; in hyperoxia). Residues Cys642, Cys666, and Lys712 each coordinate (E)-cinnamaldehyde. The helical transmembrane segment at 722-742 threads the bilayer; the sequence is MMNLGSYCLGLIPMTLLVVKI. The Extracellular portion of the chain corresponds to 743 to 767; that stretch reads QPGMAFNSTGIINGTSSTHEERIDT. 2 N-linked (GlcNAc...) asparagine glycosylation sites follow: Asn749 and Asn755. Residues 768–788 form a helical membrane-spanning segment; the sequence is LNSFPIKICMILVFLSSIFGY. Topologically, residues 789–806 are cytoplasmic; the sequence is CKEVIQIFQQKRNYFLDY. Glu791, Gln794, Asn808, and Glu811 together coordinate Ca(2+). A helical transmembrane segment spans residues 807–827; sequence NNALEWVIYTTSIIFVLPLFL. The Extracellular portion of the chain corresponds to 828–832; it reads NIPAY. A helical transmembrane segment spans residues 833 to 853; the sequence is MQWQCGAIAIFFYWMNFLLYL. At 854–876 the chain is on the cytoplasmic side; that stretch reads QRFENCGIFIVMLEVIFKTLLRS. The residue at position 859 (Cys859) is a Cysteine sulfenic acid (-SOH); transient; in hyperoxia. A helical transmembrane segment spans residues 877 to 897; the sequence is TGVFIFLLLAFGLSFYVLLNF. At 898 to 904 the chain is on the extracellular side; sequence QDAFSTP. Residues 905 to 925 constitute an intramembrane region (pore-forming); sequence LLSLIQTFSMMLGDINYRDAF. The Extracellular portion of the chain corresponds to 926-937; the sequence is LEPLFRNELAYP. The helical transmembrane segment at 938–959 threads the bilayer; sequence VLTFGQLIAFTMFVPIVLMNLL. The Cytoplasmic portion of the chain corresponds to 960 to 1125; that stretch reads IGLAVGDIAE…THCSISHPDF (166 aa). Residues 1044-1073 are a coiled coil; the sequence is MEILKQKYRLKDLTSLLEKQHELIKLIIQK. A 1,2-diacyl-sn-glycero-3-phospho-(1D-myo-inositol) is bound at residue 1048–1054; that stretch reads KQKYRLK.

It belongs to the transient receptor (TC 1.A.4) family. In terms of assembly, homotetramer. Interacts with TMEM100. Interacts with EGLN1. Interacts with the scorpion wasabi receptor toxin at the same site that electrophiles but in a non-covalent manner. Post-translationally, TRPA1 activation by electrophiles occurs though covalent modification of specific cysteine residues in the N-terminal cytoplasmic domain. In terms of processing, hydroxylation is required for TRPA1 activity inhibition in normoxia. In hypoxia, the decrease in oxygen concentration diminishes the activity of the hydroxylase EGLN1, thus relieving TRPA1 from inhibition and ultimately leading to channel activation. Oxidation of Cys-634 and Cys-859 in hyperoxia may override the hydroxylase EGLN1-mediated inhibition, causing TRPA1 activation. Expressed in inner ear (at protein level). Specifically expressed in a subset of nociceptive neurons. Expressed in the same neurons that TRPV1. In contrast, it is not expressed in neurons expressing TRPM8. Expressed in the superior cervical ganglion of vagus nerve. Expressed in the inferior ganglion (nodose ganglion) of vagus nerve. Expressed in dorsal root ganglia neurons.

It localises to the cell membrane. The catalysed reaction is Ca(2+)(in) = Ca(2+)(out). The enzyme catalyses Mg(2+)(in) = Mg(2+)(out). It carries out the reaction Na(+)(in) = Na(+)(out). It catalyses the reaction K(+)(in) = K(+)(out). The catalysed reaction is Zn(2+)(in) = Zn(2+)(out). Electrophilic ligands activate the channel by covalent modification of intracellular cysteines. Cys-622 plays a key role in covalent binding of electrophiles. Extracellular Ca(2+) both potentiates and inactivates TRPA1; a rapid potentiation follows by slow desensitization. Activated by increase in intracellular Ca(2+) concentration. Inhibited by the potent blocker of TRPV channels ruthenium red, A-967079. Activated by icilin, sulfhydryl reactive agent MTSEA, N-methyl maleimide (NMM), and PF-4840154. Also activated by hyperoxia. Activated by intracellular Zn(2+). TRPA1 activation may critically depend on the presence of small intracellular compounds such as polyphosphates. In terms of biological role, ligand-activated Ca(2+)-permeable, nonselective cation channel. Involved in pain detection and possibly also in cold perception, oxygen concentration perception, cough, itch, and inner ear function. Has a relatively high Ca(2+) selectivity, with a preference for divalent over monovalent cations (Ca(2+) &gt; Ba(2+) &gt; Mg(2+) &gt; NH4(+) &gt; Li(+) &gt; K(+)), the influx of cation into the cytoplasm, leads to membrane depolarization. Has a central role in the pain response to endogenous inflammatory mediators, such as bradykinin and to a diverse array of irritants. Activated by a large variety of structurally unrelated electrophilic and non-electrophilic chemical compounds, such as allylthiocyanate (AITC) from mustard oil or wasabi, cinnamaldehyde, diallyl disulfide (DADS) from garlic, and acrolein, an environmental irritant. Electrophilic ligands activate TRPA1 by interacting with critical N-terminal Cys residues in a covalent manner. Non-electrophile agonists bind at distinct sites in the transmembrane domain to promote channel activation. Also acts as an ionotropic cannabinoid receptor by being activated by delta(9)-tetrahydrocannabinol (THC), the psychoactive component of marijuana. May be a component for the mechanosensitive transduction channel of hair cells in inner ear, thereby participating in the perception of sounds. This chain is Transient receptor potential cation channel subfamily A member 1, found in Mus musculus (Mouse).